The primary structure comprises 506 residues: MEEIQRYLQLDRSQQHDFLYPLIFQEYIYGLAHDQGFNRWILLENPGYDNKSSLLIVKRLITQMYQQNHFLISANDSNQNPFLGRNKNLYPQIISEGFAFIVEIPFSLRLILSLEGKKKKIVKSHNLRSIHSIFPFLEDNFSHLNFVLDILIPHPIHLEILVQTLRYWVKDASSLHLLRFFLHEYCNWNSLITPKKASSSFSKRNQRLFFFLYNSHVCEYESIFVFLRNQSSHLRSTSSRALLERIYFYGKIERLVDVFVKDFQTNLCLFKDPFMHYVRYQGKSILASKGTPLLMNKWKYYLVTFWQCYFSLWFHPRRIYLNQLSNHSLEFVGYLSSVRLNASVVRSQILENSFLINNAIKKFDTLVPIIPLIGSLAKAKFCNVLGYPISKPVRADLSDSDIIDRFGRICRNLSHYHSGSSKKKSLYRIKYILRLSCARTLARKHKSTVRAFLKKLGSELLEEFLMSEEQVLSLTFPKASSTLRGVYRSRIWYLDIICINDLINQK.

This sequence belongs to the intron maturase 2 family. MatK subfamily.

It is found in the plastid. The protein localises to the chloroplast. In terms of biological role, usually encoded in the trnK tRNA gene intron. Probably assists in splicing its own and other chloroplast group II introns. This chain is Maturase K, found in Olea europaea (Common olive).